Consider the following 409-residue polypeptide: TNF receptor-associated factor 1 (409 aa).

S139 is subject to Phosphoserine. The stretch at E167 to A256 forms a coiled coil. Residues K178 and K186 each participate in a glycyl lysine isopeptide (Lys-Gly) (interchain with G-Cter in ubiquitin) cross-link. Positions D259–V405 constitute an MATH domain.

As to quaternary structure, homotrimer. Heterotrimer with TRAF2. Interacts with TNFRSF1A/TNFR1, TNFRSF1B/TNFR2, TNFRSF4, TNFRSF5/CD40, TNFRSF8/CD30, TNFRSF9/CD137, TNFRSF11A/RANK, TNFRSF13C, TNFRSF18/AITR, TNFRSF17/BCMA, TNFRSF19/TROY, TNFRSF19L/RELT, XEDAR, EDAR, Epstein-Barr virus BNFL1/LMP-1, TANK/ITRAF, TRAIP and RIPK2. Interacts with BIRC2 and BIRC3 N-terminus; a single BIRC2 or BIRC3 molecule interacts with a heterotrimer formed by TRAF1 and TRAF2. Interacts with MAP3K14. Interacts with NFATC2IP, TRAFD1 and with HIVEP3. Interacts with GPS2. In terms of processing, polyubiquitinated by BIRC2 and/or BIRC3, leading to its subsequent proteasomal degradation. Ubiquitinated by the SCF(FBXL2) complex, leading to its degradation by the proteasome.

The protein localises to the cytoplasm. Adapter molecule that regulates the activation of NF-kappa-B and JNK. Plays a role in the regulation of cell survival and apoptosis. The heterotrimer formed by TRAF1 and TRAF2 is part of a E3 ubiquitin-protein ligase complex that promotes ubiquitination of target proteins, such as MAP3K14. The TRAF1/TRAF2 complex recruits the antiapoptotic E3 protein-ubiquitin ligases BIRC2 and BIRC3 to TNFRSF1B/TNFR2. This chain is TNF receptor-associated factor 1 (Traf1), found in Mus musculus (Mouse).